A 396-amino-acid polypeptide reads, in one-letter code: Putative 2-hydroxyacid dehydrogenase YPL113C (396 aa).

NAD(+) is bound by residues 227 to 228 (SI), 311 to 313 (VGR), and Asp-337. The active site involves Arg-313. Residue Glu-342 is part of the active site. His-361 functions as the Proton donor in the catalytic mechanism. Residue 361-364 (HIGS) coordinates NAD(+).

This sequence belongs to the D-isomer specific 2-hydroxyacid dehydrogenase family.

Functionally, putative 2-hydroxyacid dehydrogenase. In Saccharomyces cerevisiae (strain ATCC 204508 / S288c) (Baker's yeast), this protein is Putative 2-hydroxyacid dehydrogenase YPL113C.